Consider the following 28-residue polypeptide: Dermaseptin-SP1 (28 aa).

In terms of tissue distribution, expressed by the skin glands.

The protein resides in the secreted. In terms of biological role, probable antimicrobial peptide which stimulates insulin-release in glucose-responsive BRIN-BD 11 cells. The sequence is that of Dermaseptin-SP1 from Agalychnis spurrelli (Gliding leaf frog).